Here is a 1047-residue protein sequence, read N- to C-terminus: Atrial natriuretic peptide receptor 2 (1047 aa).

An N-terminal signal peptide occupies residues 1-16; the sequence is MALPSLLLVVAALAGG. The Extracellular portion of the chain corresponds to 17-458; the sequence is VRPPGARNLT…DKTPLSTLAI (442 aa). Asn24 and Asn35 each carry an N-linked (GlcNAc...) asparagine glycan. A disulfide bond links Cys75 and Cys101. Asn161, Asn195, Asn244, Asn277, and Asn349 each carry an N-linked (GlcNAc...) asparagine glycan. Residues 459 to 478 traverse the membrane as a helical segment; that stretch reads VALGTGITFIMFGVSSFLIF. Topologically, residues 479 to 1047 are cytoplasmic; sequence RKLMLEKELA…GERKGPAGLL (569 aa). Phosphoserine is present on Ser513. The region spanning 513-786 is the Protein kinase domain; the sequence is SRLTLSLRGS…PDFGQIKGFI (274 aa). A Phosphothreonine modification is found at Thr516. A phosphoserine mark is found at Ser518, Ser522, Ser523, and Ser526. At Thr529 the chain carries Phosphothreonine. In terms of domain architecture, Guanylate cyclase spans 861-991; that stretch reads TIYFSDIVGF…DTVNTASRME (131 aa).

This sequence belongs to the adenylyl cyclase class-4/guanylyl cyclase family. In terms of processing, phosphorylated. Phosphorylation of the protein kinase-like domain is required for full activation by CNP. Glycosylated.

Its subcellular location is the cell membrane. The catalysed reaction is GTP = 3',5'-cyclic GMP + diphosphate. In terms of biological role, receptor for the C-type natriuretic peptide NPPC/CNP hormone. Has guanylate cyclase activity upon binding of its ligand. May play a role in the regulation of skeletal growth. This Bos taurus (Bovine) protein is Atrial natriuretic peptide receptor 2 (NPR2).